The following is a 107-amino-acid chain: Pre-mRNA-splicing factor RDS3 (107 aa).

This sequence belongs to the PHF5 family. As to quaternary structure, component of the spliceosome where it interacts with CUS1, HSH49, HSH155, IST3 and RSE1. Also interacts with YRA1.

It localises to the nucleus. Its function is as follows. Required for pre-mRNA splicing. Involved in regulation of drug sensitivity and may play a role in multidrug resistance. The sequence is that of Pre-mRNA-splicing factor RDS3 (RDS3) from Saccharomyces cerevisiae (strain ATCC 204508 / S288c) (Baker's yeast).